We begin with the raw amino-acid sequence, 185 residues long: Peptidyl-tRNA hydrolase (185 aa).

Y14 contacts tRNA. Residue H19 is the Proton acceptor of the active site. Y65, N67, and N113 together coordinate tRNA.

Belongs to the PTH family. In terms of assembly, monomer.

The protein localises to the cytoplasm. It catalyses the reaction an N-acyl-L-alpha-aminoacyl-tRNA + H2O = an N-acyl-L-amino acid + a tRNA + H(+). In terms of biological role, hydrolyzes ribosome-free peptidyl-tRNAs (with 1 or more amino acids incorporated), which drop off the ribosome during protein synthesis, or as a result of ribosome stalling. Functionally, catalyzes the release of premature peptidyl moieties from peptidyl-tRNA molecules trapped in stalled 50S ribosomal subunits, and thus maintains levels of free tRNAs and 50S ribosomes. This chain is Peptidyl-tRNA hydrolase, found in Rickettsia akari (strain Hartford).